The chain runs to 459 residues: MSDWKEYSLGDISRNISRRFDFNAYPNVVFINTGDVLNNKFLHCEISNVKDLPGQAKKAIKKGDILYSEIRPGNGRYLFVDNDLDNYVVSTKFMVIEPNANIVLPEFLFLLLISNETTEYFKMIAESRSGTFPQITFDSVSSLSLNIPDKETQQKILDIITPLDDKIELNTQINQTLEQIAQALFKSWFVDFDPVRAKAQALSDGMSLEQAELAAMQAISGKTPEELTALSQTQPDRYAELAETAKAFPCEMVEVDGVEVDGVEVPRGWEMKALSDLGQIICGKTPSKSNKEFYGDDVPFIKIPDMHNQVFITQTTDNLSVVGANYQSKKYIPAKSICVSCIATVGLVSMTSKPSHTNQQINSIIPDDEQSCEFLYLSLKQPSMTKYLKDLASGGTATLNLNTSTFSKIEIITPSKEIIYIFQKKVVSIFEKTLSNSIENKRLTEIRDLLLPRLLNGEI.

This sequence belongs to the type-I restriction system S methylase family. The type I restriction/modification system is composed of three polypeptides R, M and S; the restriction enzyme has stoichiometry R(2)M(2)S(1) while the methyltransferase is M(2)S(1).

Functionally, the specificity (S) subunit of a type I restriction enzyme; this subunit dictates DNA sequence specificity. The M and S subunits together form a methyltransferase (MTase) that methylates adenosines in the sequence 5'-RAACN(5)TAG-3'. Methylation protects against cleavage by HindI. In the presence of the R subunit the complex can also act as an endonuclease, binding to the same target sequence but cutting the DNA some distance from this site. Whether the DNA is cut or modified depends on the methylation state of the target sequence. When the target site is unmodified, the DNA is cut. When the target site is hemimethylated, the complex acts as a maintenance MTase modifying the DNA so that both strands become methylated. After locating a non-methylated recognition site, the enzyme complex serves as a molecular motor that translocates DNA in an ATP-dependent manner until a collision occurs that triggers cleavage. In Haemophilus influenzae (strain ATCC 51907 / DSM 11121 / KW20 / Rd), this protein is Type I restriction enzyme HindI specificity subunit.